A 166-amino-acid chain; its full sequence is Small ribosomal subunit protein uS5 (166 aa).

One can recognise an S5 DRBM domain in the interval L11 to V74.

Belongs to the universal ribosomal protein uS5 family. As to quaternary structure, part of the 30S ribosomal subunit. Contacts proteins S4 and S8.

Its function is as follows. With S4 and S12 plays an important role in translational accuracy. Located at the back of the 30S subunit body where it stabilizes the conformation of the head with respect to the body. This chain is Small ribosomal subunit protein uS5, found in Sodalis glossinidius (strain morsitans).